The chain runs to 196 residues: Lipoprotein signal peptidase (196 aa).

3 consecutive transmembrane segments (helical) span residues 17–37 (SIIITLVIIDQLSKWWFIDNL), 73–93 (SNAIFLITNTLIVCYLYYLMI), and 96–116 (NTIGSFAGYSFVIGGAVGNLI). Catalysis depends on residues D126 and D144. Residues 135–155 (YSFPVFNLADCFITIGVIILI) traverse the membrane as a helical segment.

The protein belongs to the peptidase A8 family.

Its subcellular location is the cell inner membrane. It catalyses the reaction Release of signal peptides from bacterial membrane prolipoproteins. Hydrolyzes -Xaa-Yaa-Zaa-|-(S,diacylglyceryl)Cys-, in which Xaa is hydrophobic (preferably Leu), and Yaa (Ala or Ser) and Zaa (Gly or Ala) have small, neutral side chains.. Its pathway is protein modification; lipoprotein biosynthesis (signal peptide cleavage). In terms of biological role, this protein specifically catalyzes the removal of signal peptides from prolipoproteins. The chain is Lipoprotein signal peptidase from Rickettsia akari (strain Hartford).